Consider the following 336-residue polypeptide: Eukaryotic translation initiation factor 3 subunit I (336 aa).

WD repeat units follow at residues 8-47, 50-91, 146-185, 190-229, and 287-326; these read GHERSLTQIKFNRDGDLLFSVSKDKIVCAWWTANGERLGT, GHLG…KVWE, CNESKATVAGWSYLGKYIIAGHEDGSVSQYDAKTGDQLEN, EFDHQINDIQFSADRTYFITASKDKSAKLISSRNLAILKT, and GHFGPLNTVGVHPNGTAYASGGEDGYVRVHHFDKPYFDFM.

It belongs to the eIF-3 subunit I family. Component of the eukaryotic translation initiation factor 3 (eIF-3) complex.

It localises to the cytoplasm. Its function is as follows. Component of the eukaryotic translation initiation factor 3 (eIF-3) complex, which is involved in protein synthesis of a specialized repertoire of mRNAs and, together with other initiation factors, stimulates binding of mRNA and methionyl-tRNAi to the 40S ribosome. The eIF-3 complex specifically targets and initiates translation of a subset of mRNAs involved in cell proliferation. The protein is Eukaryotic translation initiation factor 3 subunit I (tif34) of Aspergillus terreus (strain NIH 2624 / FGSC A1156).